Here is a 494-residue protein sequence, read N- to C-terminus: Sulfate adenylyltransferase subunit 1 (494 aa).

The region spanning 28–242 is the tr-type G domain; that stretch reads TRPLRLITCG…TLELATVRST (215 aa). The segment at 37–44 is G1; sequence GSVDDGKS. 37 to 44 serves as a coordination point for GTP; that stretch reads GSVDDGKS. Residues 94 to 98 form a G2 region; it reads GITID. The tract at residues 115-118 is G3; the sequence is DTPG. Residues 115–119 and 170–173 contribute to the GTP site; these read DTPGH and NKID. The segment at 170–173 is G4; it reads NKID. The interval 207 to 209 is G5; it reads SAL.

It belongs to the TRAFAC class translation factor GTPase superfamily. Classic translation factor GTPase family. CysN/NodQ subfamily. Heterodimer composed of CysD, the smaller subunit, and CysN.

The catalysed reaction is sulfate + ATP + H(+) = adenosine 5'-phosphosulfate + diphosphate. Its pathway is sulfur metabolism; hydrogen sulfide biosynthesis; sulfite from sulfate: step 1/3. In terms of biological role, with CysD forms the ATP sulfurylase (ATPS) that catalyzes the adenylation of sulfate producing adenosine 5'-phosphosulfate (APS) and diphosphate, the first enzymatic step in sulfur assimilation pathway. APS synthesis involves the formation of a high-energy phosphoric-sulfuric acid anhydride bond driven by GTP hydrolysis by CysN coupled to ATP hydrolysis by CysD. This is Sulfate adenylyltransferase subunit 1 from Agrobacterium fabrum (strain C58 / ATCC 33970) (Agrobacterium tumefaciens (strain C58)).